A 186-amino-acid polypeptide reads, in one-letter code: Putative transcriptional regulator encoded by LINC00473 (186 aa).

Residues 1-62 are disordered; that stretch reads MELSAAAGRR…RDCTPTCTNA (62 aa). A compositionally biased stretch (basic and acidic residues) spans 18–40; sequence FTGRHRTERSQERGSTPRKERSM.

In terms of biological role, may play a role in cAMP-mediated gene transcription. This chain is Putative transcriptional regulator encoded by LINC00473 (LINC00473), found in Homo sapiens (Human).